A 295-amino-acid chain; its full sequence is Cytidine deaminase (295 aa).

CMP/dCMP-type deaminase domains are found at residues 48-168 and 187-295; these read TDSE…FGPA and KETD…YVAA. 89–91 contributes to the substrate binding site; it reads NME. His-102 is a Zn(2+) binding site. Catalysis depends on Glu-104, which acts as the Proton donor. Zn(2+) contacts are provided by Cys-129 and Cys-132.

It belongs to the cytidine and deoxycytidylate deaminase family. In terms of assembly, homodimer. Zn(2+) serves as cofactor.

The catalysed reaction is cytidine + H2O + H(+) = uridine + NH4(+). It carries out the reaction 2'-deoxycytidine + H2O + H(+) = 2'-deoxyuridine + NH4(+). This enzyme scavenges exogenous and endogenous cytidine and 2'-deoxycytidine for UMP synthesis. The sequence is that of Cytidine deaminase from Photobacterium profundum (strain SS9).